A 33-amino-acid polypeptide reads, in one-letter code: Rugosin-B (33 aa).

Cysteine 27 and cysteine 33 are oxidised to a cystine.

The protein belongs to the frog skin active peptide (FSAP) family. Brevinin subfamily. In terms of tissue distribution, expressed by the skin glands.

The protein resides in the secreted. In terms of biological role, shows antibacterial activity against both Gram-negative and Gram-positive bacteria. This chain is Rugosin-B, found in Glandirana rugosa (Japanese wrinkled frog).